A 209-amino-acid chain; its full sequence is Large ribosomal subunit protein uL3 (209 aa).

A disordered region spans residues 121-154 (GGIKRHNFHRGPMAHGSKYHRRPGSSAAKGPART).

Belongs to the universal ribosomal protein uL3 family. As to quaternary structure, part of the 50S ribosomal subunit. Forms a cluster with proteins L14 and L19.

In terms of biological role, one of the primary rRNA binding proteins, it binds directly near the 3'-end of the 23S rRNA, where it nucleates assembly of the 50S subunit. The protein is Large ribosomal subunit protein uL3 of Desulforamulus reducens (strain ATCC BAA-1160 / DSM 100696 / MI-1) (Desulfotomaculum reducens).